We begin with the raw amino-acid sequence, 298 residues long: Porphobilinogen deaminase (298 aa).

Cys239 carries the S-(dipyrrolylmethanemethyl)cysteine modification.

This sequence belongs to the HMBS family. Monomer. Dipyrromethane is required as a cofactor.

The enzyme catalyses 4 porphobilinogen + H2O = hydroxymethylbilane + 4 NH4(+). Its pathway is porphyrin-containing compound metabolism; protoporphyrin-IX biosynthesis; coproporphyrinogen-III from 5-aminolevulinate: step 2/4. In terms of biological role, tetrapolymerization of the monopyrrole PBG into the hydroxymethylbilane pre-uroporphyrinogen in several discrete steps. The chain is Porphobilinogen deaminase from Ehrlichia chaffeensis (strain ATCC CRL-10679 / Arkansas).